Reading from the N-terminus, the 170-residue chain is Mediator of RNA polymerase II transcription subunit 10 (170 aa).

The protein belongs to the Mediator complex subunit 10 family. As to quaternary structure, component of the Mediator complex.

It localises to the nucleus. Its function is as follows. Component of the Mediator complex, a coactivator involved in the regulated transcription of nearly all RNA polymerase II-dependent genes. Mediator functions as a bridge to convey information from gene-specific regulatory proteins to the basal RNA polymerase II transcription machinery. Mediator is recruited to promoters by direct interactions with regulatory proteins and serves as a scaffold for the assembly of a functional preinitiation complex with RNA polymerase II and the general transcription factors. The polypeptide is Mediator of RNA polymerase II transcription subunit 10 (NUT2) (Candida albicans (strain SC5314 / ATCC MYA-2876) (Yeast)).